The sequence spans 140 residues: 3-hydroxyacyl-[acyl-carrier-protein] dehydratase FabZ (140 aa).

Residue histidine 47 is part of the active site.

The protein belongs to the thioester dehydratase family. FabZ subfamily.

The protein localises to the cytoplasm. The catalysed reaction is a (3R)-hydroxyacyl-[ACP] = a (2E)-enoyl-[ACP] + H2O. Functionally, involved in unsaturated fatty acids biosynthesis. Catalyzes the dehydration of short chain beta-hydroxyacyl-ACPs and long chain saturated and unsaturated beta-hydroxyacyl-ACPs. The chain is 3-hydroxyacyl-[acyl-carrier-protein] dehydratase FabZ from Streptococcus pneumoniae serotype 4 (strain ATCC BAA-334 / TIGR4).